The chain runs to 334 residues: Type IV inositol polyphosphate 5-phosphatase 11 (334 aa).

Catalytic stretches follow at residues 206–222 (DLTV…QDVS) and 282–297 (KIRV…FKIQ).

Belongs to the inositol polyphosphate 5-phosphatase family. In terms of tissue distribution, expressed ubiquitously.

Its subcellular location is the cell membrane. It carries out the reaction a 1,2-diacyl-sn-glycero-3-phospho-(1D-myo-inositol-4,5-bisphosphate) + H2O = a 1,2-diacyl-sn-glycero-3-phospho-(1D-myo-inositol 4-phosphate) + phosphate. It catalyses the reaction a 1,2-diacyl-sn-glycero-3-phospho-(1D-myo-inositol-3,4,5-trisphosphate) + H2O = a 1,2-diacyl-sn-glycero-3-phospho-(1D-myo-inositol-3,4-bisphosphate) + phosphate. Its function is as follows. Has phosphatase activity toward PtdIns(4,5)P2, and in vitro toward PtdIns(3,5)P2 and PtdIns(3,4,5)P3. Cannot dephosphorylate PtdIns(5)P, Ins(1,4,5)P3 and Ins(1,3,4,5)P4. The protein is Type IV inositol polyphosphate 5-phosphatase 11 of Arabidopsis thaliana (Mouse-ear cress).